The sequence spans 434 residues: Glutamyl-tRNA reductase (434 aa).

Residues 49-52 (TCNR), Ser109, 114-116 (EPQ), and Gln120 each bind substrate. The active-site Nucleophile is Cys50. 189–194 (GAGEMC) is a binding site for NADP(+).

This sequence belongs to the glutamyl-tRNA reductase family. In terms of assembly, homodimer.

The catalysed reaction is (S)-4-amino-5-oxopentanoate + tRNA(Glu) + NADP(+) = L-glutamyl-tRNA(Glu) + NADPH + H(+). It functions in the pathway porphyrin-containing compound metabolism; protoporphyrin-IX biosynthesis; 5-aminolevulinate from L-glutamyl-tRNA(Glu): step 1/2. Catalyzes the NADPH-dependent reduction of glutamyl-tRNA(Glu) to glutamate 1-semialdehyde (GSA). In Geobacter sulfurreducens (strain ATCC 51573 / DSM 12127 / PCA), this protein is Glutamyl-tRNA reductase.